A 297-amino-acid polypeptide reads, in one-letter code: Myoblast determination protein 1 homolog (297 aa).

Positions 52–76 (KPEEHPHHHGHHHGHPHEEEHVRAP) are disordered. The bHLH domain maps to 101-152 (DRRKAATMRERRRLSKVNEAFETLKRCTSTNPNQRLPKVEILRNAIRYIESL). 2 disordered regions span residues 171–221 (SGES…GKSS) and 243–297 (CPIL…YQVL). Composition is skewed to polar residues over residues 174–184 (SDASSPRSNCS) and 258–297 (CSPQ…YQVL).

Efficient DNA binding requires dimerization with another bHLH protein. Seems to form active heterodimers with ITF-2.

Its subcellular location is the nucleus. Its function is as follows. Acts as a transcriptional activator that promotes transcription of muscle-specific target genes and plays a role in muscle differentiation. Induces fibroblasts to differentiate into myoblasts. Interacts with and is inhibited by the twist protein. This interaction probably involves the basic domains of both proteins. This chain is Myoblast determination protein 1 homolog (MYOD1), found in Coturnix japonica (Japanese quail).